The chain runs to 444 residues: Vacuolar protein sorting-associated protein 4B (444 aa).

The MIT domain occupies 4–82 (TSPNLQKAID…KEYLKNKEKK (79 aa)). Residues 19 to 82 (AQEDKAGNYE…KEYLKNKEKK (64 aa)) adopt a coiled-coil conformation. Residues 78–88 (NKEKKAQKPVK) are compositionally biased toward basic and acidic residues. Residues 78–117 (NKEKKAQKPVKEGQPSPADEKGNDSDGEGESDDPEKKKLQ) are disordered. A phosphoserine mark is found at S93, S102, and S108. Residue 174–181 (GPPGTGKS) coordinates ATP. The residue at position 410 (S410) is a Phosphoserine.

The protein belongs to the AAA ATPase family. Proposed to be monomeric or homodimeric in nucleotide-free form and to oligomerize upon binding to ATP to form two stacked hexameric or heptameric rings with a central pore through which ESCRT-III substrates are translocated in an ATP-dependent manner. In vitro, associates on the inside of a helical tubular structure formed by a CHMP2A-CHMP3 polymer. Interacts with CHMP1A, CHMP1B, CHMP2A, CHMP4B and CHMP6. Interacts with VPS4A; the interaction suggests a heteromeric assembly with VPS4A. Interacts with VTA1.

It is found in the late endosome membrane. It catalyses the reaction ATP + H2O = ADP + phosphate + H(+). In terms of biological role, involved in late steps of the endosomal multivesicular bodies (MVB) pathway. Recognizes membrane-associated ESCRT-III assemblies and catalyzes their disassembly, possibly in combination with membrane fission. Redistributes the ESCRT-III components to the cytoplasm for further rounds of MVB sorting. MVBs contain intraluminal vesicles (ILVs) that are generated by invagination and scission from the limiting membrane of the endosome and mostly are delivered to lysosomes enabling degradation of membrane proteins, such as stimulated growth factor receptors, lysosomal enzymes and lipids. VPS4A/B are required for the exosomal release of SDCBP, CD63 and syndecan. Its function is as follows. (Microbial infection) In conjunction with the ESCRT machinery also appears to function in topologically equivalent membrane fission events, such as the terminal stages of cytokinesis and enveloped virus budding (lentiviruses). The polypeptide is Vacuolar protein sorting-associated protein 4B (VPS4B) (Pongo abelii (Sumatran orangutan)).